Here is a 338-residue protein sequence, read N- to C-terminus: Tryptophan--tRNA ligase (338 aa).

Residues 12 to 14 (QPT) and 20 to 21 (GN) each bind ATP. The short motif at 13–21 (PTGDLHIGN) is the 'HIGH' region element. Asp136 serves as a coordination point for L-tryptophan. ATP-binding positions include 148 to 150 (GED), Ile191, and 200 to 204 (KMSKS). The short motif at 200–204 (KMSKS) is the 'KMSKS' region element.

The protein belongs to the class-I aminoacyl-tRNA synthetase family. Homodimer.

It localises to the cytoplasm. The catalysed reaction is tRNA(Trp) + L-tryptophan + ATP = L-tryptophyl-tRNA(Trp) + AMP + diphosphate + H(+). In terms of biological role, catalyzes the attachment of tryptophan to tRNA(Trp). This is Tryptophan--tRNA ligase from Prochlorococcus marinus subsp. pastoris (strain CCMP1986 / NIES-2087 / MED4).